Here is a 184-residue protein sequence, read N- to C-terminus: UPF0301 protein RSKD131_2391 (184 aa).

Belongs to the UPF0301 (AlgH) family.

This Cereibacter sphaeroides (strain KD131 / KCTC 12085) (Rhodobacter sphaeroides) protein is UPF0301 protein RSKD131_2391.